We begin with the raw amino-acid sequence, 418 residues long: Tryptophan synthase beta chain (418 aa).

A compositionally biased stretch (polar residues) spans 1–12 (MTSTLPTANTPD). A disordered region spans residues 1–21 (MTSTLPTANTPDPASLMPSVR). An N6-(pyridoxal phosphate)lysine modification is found at K111.

This sequence belongs to the TrpB family. Tetramer of two alpha and two beta chains. It depends on pyridoxal 5'-phosphate as a cofactor.

The catalysed reaction is (1S,2R)-1-C-(indol-3-yl)glycerol 3-phosphate + L-serine = D-glyceraldehyde 3-phosphate + L-tryptophan + H2O. It functions in the pathway amino-acid biosynthesis; L-tryptophan biosynthesis; L-tryptophan from chorismate: step 5/5. The beta subunit is responsible for the synthesis of L-tryptophan from indole and L-serine. This chain is Tryptophan synthase beta chain, found in Synechococcus sp. (strain CC9311).